Here is a 578-residue protein sequence, read N- to C-terminus: Interleukin-10 receptor subunit alpha (578 aa).

Positions 1–21 (MLPCLVVLLAALLSLRLGSDA) are cleaved as a signal peptide. At 22-235 (HGTELPSPPS…LTRQYFTVTN (214 aa)) the chain is on the extracellular side. N-linked (GlcNAc...) asparagine glycosylation is found at asparagine 50, asparagine 74, asparagine 110, asparagine 154, asparagine 177, and asparagine 189. Cysteines 56 and 75 form a disulfide. A disulfide bridge links cysteine 202 with cysteine 223. Residues 236–256 (VIIFFAFVLLLSGALAYCLAL) traverse the membrane as a helical segment. At 257 to 578 (QLYVRRRKKL…PLISSLQSSE (322 aa)) the chain is on the cytoplasmic side. The segment at 313–436 (LHGSTDSGFG…PPEPEVPGEE (124 aa)) is disordered. Residues 316 to 332 (STDSGFGSTKPSLQTEE) show a composition bias toward polar residues. The BTRC recognition motif signature appears at 318 to 323 (DSGFGS). The span at 357–371 (GDSCSSGSSNSTDSG) shows a compositional bias: low complexity. Positions 377-396 (PSLSPSTGPTWEQQVGSNSR) are enriched in polar residues.

The protein belongs to the type II cytokine receptor family. As to quaternary structure, interacts with IL10. Interacts with IL10RB. Interacts (via its cytoplasmic domain) with JAK1 (via N-terminus). Interacts with BTRC; this interaction leads to IL10RA ubiquitination and subsequent degradation. Interacts with STAT3. (Microbial infection) Interacts with human cytomegalovirus protein IL10. In terms of assembly, (Microbial infection) Interacts with Epstein-Barr virus protein IL10. Post-translationally, phosphorylated. Phosphorylation of the cytoplasmic tail induced STAT3 activation. In terms of processing, ubiquitinated by BTRC; ubiquitination leads to endocytosis and subsequent degradation of IL10RA. In terms of tissue distribution, primarily expressed in hematopoetic cells including B-cells, T-cells, NK cells, monocytes and macrophages. Not expressed in non-hematopoetic cells such as fibroblasts or endothelial cells.

It localises to the cell membrane. The protein resides in the cytoplasm. Functionally, cell surface receptor for the cytokine IL10 that participates in IL10-mediated anti-inflammatory functions, limiting excessive tissue disruption caused by inflammation. Upon binding to IL10, induces a conformational change in IL10RB, allowing IL10RB to bind IL10 as well. In turn, the heterotetrameric assembly complex, composed of two subunits of IL10RA and IL10RB, activates the kinases JAK1 and TYK2 that are constitutively associated with IL10RA and IL10RB respectively. These kinases then phosphorylate specific tyrosine residues in the intracellular domain in IL10RA leading to the recruitment and subsequent phosphorylation of STAT3. Once phosphorylated, STAT3 homodimerizes, translocates to the nucleus and activates the expression of anti-inflammatory genes. In addition, IL10RA-mediated activation of STAT3 inhibits starvation-induced autophagy. This chain is Interleukin-10 receptor subunit alpha (IL10RA), found in Homo sapiens (Human).